The following is a 236-amino-acid chain: Ribose-5-phosphate isomerase A (236 aa).

Substrate-binding positions include 33 to 36 (TGST), 90 to 93 (DGAD), and 103 to 106 (KGGG). Glutamate 112 serves as the catalytic Proton acceptor. Lysine 130 provides a ligand contact to substrate.

This sequence belongs to the ribose 5-phosphate isomerase family. Homodimer.

It carries out the reaction aldehydo-D-ribose 5-phosphate = D-ribulose 5-phosphate. It functions in the pathway carbohydrate degradation; pentose phosphate pathway; D-ribose 5-phosphate from D-ribulose 5-phosphate (non-oxidative stage): step 1/1. Functionally, catalyzes the reversible conversion of ribose-5-phosphate to ribulose 5-phosphate. This chain is Ribose-5-phosphate isomerase A, found in Trichormus variabilis (strain ATCC 29413 / PCC 7937) (Anabaena variabilis).